We begin with the raw amino-acid sequence, 404 residues long: GID complex subunit 9 (404 aa).

Residues 116–148 form the LisH domain; sequence SRVRLNRLVADYMMANGYHGAAALLCKDSQLEN. A CTLH domain is found at 154-211; the sequence is IYKRYQLIHDSILQQELKEVLSWCSEHRAILKKNNSTLELEVRLQRFIELIKSKKLCQ. Residues 317 to 389 form an RING-Gid-type zinc finger; that stretch reads CPVCTPCLND…REGFLRDPYS (73 aa).

The protein belongs to the FYV10 family. In terms of assembly, identified in the GID/CTLH complex. In the absence of stress, the complex exists as an inactive anticipatory complex (GID(Ant)), composed of Gid1, the E3 ubiquitin-ligase Gid2, Gid5, Gid8, and the RING-like subunit Gid9, awaiting a substrate receptor to form the active E3 ligase complex. When cells are shifted to glucose-containing medium, the substrate receptor Gid4 is induced and becomes part of the complex, named GID(SR4). Additionally, Gid7 transforms the GID(SR4) E3 ligase core into a higher-order supramolecular assembly (Chelator-GID(SR4)). Under osmotic or heat stress, the substrate receptor Gid10 is induced and becomes part of the complex, named GID(SR10).

The protein resides in the cytoplasm. It localises to the nucleus. It carries out the reaction S-ubiquitinyl-[E2 ubiquitin-conjugating enzyme]-L-cysteine + [acceptor protein]-L-lysine = [E2 ubiquitin-conjugating enzyme]-L-cysteine + N(6)-ubiquitinyl-[acceptor protein]-L-lysine.. It functions in the pathway protein modification; protein ubiquitination. Functionally, component of the GID E3 ligase complex recruiting N termini and catalyzing ubiquitination of proteins targeted for degradation. GID E3 is regulated through assembly with interchangeable N-degron-binding substrate receptors induced by distinct environmental perturbations. Required for the adaptation to the presence of glucose in the growth medium; mediates in association with the substrate receptor VID24/GID4 the degradation of enzymes involved in gluconeogenesis when cells are shifted to glucose-containing medium. The protein is GID complex subunit 9 (gid9) of Schizosaccharomyces pombe (strain 972 / ATCC 24843) (Fission yeast).